Here is an 832-residue protein sequence, read N- to C-terminus: DNA polymerase I, thermostable (832 aa).

In terms of domain architecture, 5'-3' exonuclease spans 175 to 260 (RPDQWADYRA…DLPLEVDFAK (86 aa)). Positions 410–832 (ERLFANLWGR…IGEDWLSAKE (423 aa)) are polymerase.

Belongs to the DNA polymerase type-A family.

It catalyses the reaction DNA(n) + a 2'-deoxyribonucleoside 5'-triphosphate = DNA(n+1) + diphosphate. In addition to polymerase activity, this DNA polymerase exhibits 5'-3' exonuclease activity. Unlikely to have 3'-5' exonuclease activity due to absence of a 3'-5' exonuclease domain. This is DNA polymerase I, thermostable (polA) from Thermus aquaticus.